A 171-amino-acid chain; its full sequence is Transcription antitermination protein NusB (171 aa).

This sequence belongs to the NusB family.

Its function is as follows. Involved in transcription antitermination. Required for transcription of ribosomal RNA (rRNA) genes. Binds specifically to the boxA antiterminator sequence of the ribosomal RNA (rrn) operons. In Pelodictyon phaeoclathratiforme (strain DSM 5477 / BU-1), this protein is Transcription antitermination protein NusB.